The following is a 121-amino-acid chain: uncharacterized protein (121 aa).

The next 3 membrane-spanning stretches (helical) occupy residues 12-32, 35-55, and 67-87; these read MIGIAALAVGIVLGLVFHPGV, VIQPYLPIAVVAALDAVFGGL, and VFVVSFVFNVLVAALIVYVGD.

It belongs to the sbp family.

The protein resides in the cell membrane. This is an uncharacterized protein from Mycobacterium bovis (strain ATCC BAA-935 / AF2122/97).